The chain runs to 299 residues: 4-diphosphocytidyl-2-C-methyl-D-erythritol kinase (299 aa).

Residue lysine 11 is part of the active site. An ATP-binding site is contributed by 94-104 (PQGGGLGGGSS). Aspartate 136 is an active-site residue.

The protein belongs to the GHMP kinase family. IspE subfamily.

The enzyme catalyses 4-CDP-2-C-methyl-D-erythritol + ATP = 4-CDP-2-C-methyl-D-erythritol 2-phosphate + ADP + H(+). Its pathway is isoprenoid biosynthesis; isopentenyl diphosphate biosynthesis via DXP pathway; isopentenyl diphosphate from 1-deoxy-D-xylulose 5-phosphate: step 3/6. Catalyzes the phosphorylation of the position 2 hydroxy group of 4-diphosphocytidyl-2C-methyl-D-erythritol. The polypeptide is 4-diphosphocytidyl-2-C-methyl-D-erythritol kinase (Bordetella parapertussis (strain 12822 / ATCC BAA-587 / NCTC 13253)).